Here is a 776-residue protein sequence, read N- to C-terminus: Glucocorticoid receptor (776 aa).

Disordered regions lie at residues Met1–Lys25, Ser47–Asp86, and Ser394–Pro415. The interval Met1–Leu419 is modulating. Polar residues predominate over residues Ser47–Pro83. Residues Ser403–Thr413 show a composition bias toward low complexity. 2 NR C4-type zinc fingers span residues Cys420–Cys440 and Cys456–Cys480. The nuclear receptor DNA-binding region spans Cys420–Met485. The tract at residues Asn486 to Ala522 is hinge. One can recognise an NR LBD domain in the interval Ser523–Ser757.

Belongs to the nuclear hormone receptor family. NR3 subfamily. Heteromultimeric cytoplasmic complex with HSP90. Upon ligand binding the complex undergoes a conformation change and moves to the nucleus, where it dissociates. Binds to DNA as a homodimer, and as heterodimer with NR3C2. Interaction with numerous other transcription factors modulates transcription activation. Expressed in liver with relative abundance.

It is found in the cytoplasm. Its subcellular location is the nucleus. It localises to the mitochondrion. The protein resides in the cytoskeleton. The protein localises to the spindle. It is found in the microtubule organizing center. Its subcellular location is the centrosome. In terms of biological role, receptor for glucocorticoids (GC). Has a dual mode of action: as a transcription factor that binds to glucocorticoid response elements (GRE), both for nuclear and mitochondrial DNA, and as a modulator of other transcription factors. Affects inflammatory responses, cellular proliferation and differentiation in target tissues. Involved in chromatin remodeling. Plays a role in rapid mRNA degradation by binding to the 5' UTR of target mRNAs and interacting with PNRC2 in a ligand-dependent manner which recruits the RNA helicase UPF1 and the mRNA-decapping enzyme DCP1A, leading to RNA decay. Could act as a coactivator for STAT5-dependent transcription upon growth hormone (GH) stimulation and could reveal an essential role of hepatic GR in the control of body growth. Mediates glucocorticoid-induced apoptosis. Promotes accurate chromosome segregation during mitosis. May act as a tumor suppressor. May play a negative role in adipogenesis through the regulation of lipolytic and antilipogenic gene expression. This Xenopus laevis (African clawed frog) protein is Glucocorticoid receptor (nr3c1).